A 283-amino-acid chain; its full sequence is 4-hydroxy-3-methylbut-2-enyl diphosphate reductase (283 aa).

A [4Fe-4S] cluster-binding site is contributed by C12. (2E)-4-hydroxy-3-methylbut-2-enyl diphosphate is bound by residues H40 and H73. Residues H40 and H73 each contribute to the dimethylallyl diphosphate site. Isopentenyl diphosphate is bound by residues H40 and H73. C95 lines the [4Fe-4S] cluster pocket. H123 is a (2E)-4-hydroxy-3-methylbut-2-enyl diphosphate binding site. H123 serves as a coordination point for dimethylallyl diphosphate. H123 serves as a coordination point for isopentenyl diphosphate. Catalysis depends on E125, which acts as the Proton donor. T161 is a (2E)-4-hydroxy-3-methylbut-2-enyl diphosphate binding site. C189 contributes to the [4Fe-4S] cluster binding site. Residues S217, N219, and S261 each contribute to the (2E)-4-hydroxy-3-methylbut-2-enyl diphosphate site. Dimethylallyl diphosphate-binding residues include S217, N219, and S261. Residues S217, N219, and S261 each contribute to the isopentenyl diphosphate site.

Belongs to the IspH family. It depends on [4Fe-4S] cluster as a cofactor.

It catalyses the reaction isopentenyl diphosphate + 2 oxidized [2Fe-2S]-[ferredoxin] + H2O = (2E)-4-hydroxy-3-methylbut-2-enyl diphosphate + 2 reduced [2Fe-2S]-[ferredoxin] + 2 H(+). The enzyme catalyses dimethylallyl diphosphate + 2 oxidized [2Fe-2S]-[ferredoxin] + H2O = (2E)-4-hydroxy-3-methylbut-2-enyl diphosphate + 2 reduced [2Fe-2S]-[ferredoxin] + 2 H(+). It functions in the pathway isoprenoid biosynthesis; dimethylallyl diphosphate biosynthesis; dimethylallyl diphosphate from (2E)-4-hydroxy-3-methylbutenyl diphosphate: step 1/1. It participates in isoprenoid biosynthesis; isopentenyl diphosphate biosynthesis via DXP pathway; isopentenyl diphosphate from 1-deoxy-D-xylulose 5-phosphate: step 6/6. In terms of biological role, catalyzes the conversion of 1-hydroxy-2-methyl-2-(E)-butenyl 4-diphosphate (HMBPP) into a mixture of isopentenyl diphosphate (IPP) and dimethylallyl diphosphate (DMAPP). Acts in the terminal step of the DOXP/MEP pathway for isoprenoid precursor biosynthesis. This Citrifermentans bemidjiense (strain ATCC BAA-1014 / DSM 16622 / JCM 12645 / Bem) (Geobacter bemidjiensis) protein is 4-hydroxy-3-methylbut-2-enyl diphosphate reductase.